We begin with the raw amino-acid sequence, 283 residues long: Thymidylate synthase (283 aa).

R22 contacts dUMP. Residue C160 is the Nucleophile of the active site. DUMP-binding positions include 180-183, N191, and 221-223; these read RSCD and HIY. D183 provides a ligand contact to (6R)-5,10-methylene-5,6,7,8-tetrahydrofolate. (6R)-5,10-methylene-5,6,7,8-tetrahydrofolate is bound at residue S282.

This sequence belongs to the thymidylate synthase family. Bacterial-type ThyA subfamily. As to quaternary structure, homodimer.

It localises to the cytoplasm. It catalyses the reaction dUMP + (6R)-5,10-methylene-5,6,7,8-tetrahydrofolate = 7,8-dihydrofolate + dTMP. The protein operates within pyrimidine metabolism; dTTP biosynthesis. Its function is as follows. Catalyzes the reductive methylation of 2'-deoxyuridine-5'-monophosphate (dUMP) to 2'-deoxythymidine-5'-monophosphate (dTMP) while utilizing 5,10-methylenetetrahydrofolate (mTHF) as the methyl donor and reductant in the reaction, yielding dihydrofolate (DHF) as a by-product. This enzymatic reaction provides an intracellular de novo source of dTMP, an essential precursor for DNA biosynthesis. The polypeptide is Thymidylate synthase (Shewanella halifaxensis (strain HAW-EB4)).